Consider the following 304-residue polypeptide: Oxygen-dependent coproporphyrinogen-III oxidase (304 aa).

Residue Ser-93 coordinates substrate. Residues His-97 and His-107 each coordinate a divalent metal cation. The active-site Proton donor is the His-107. Asn-109–Arg-111 contacts substrate. A divalent metal cation-binding residues include His-146 and His-176. An important for dimerization region spans residues Tyr-241–Gly-276. Position 259 to 261 (Gly-259 to Arg-261) interacts with substrate.

This sequence belongs to the aerobic coproporphyrinogen-III oxidase family. In terms of assembly, homodimer. Requires a divalent metal cation as cofactor.

The protein resides in the cytoplasm. The enzyme catalyses coproporphyrinogen III + O2 + 2 H(+) = protoporphyrinogen IX + 2 CO2 + 2 H2O. It functions in the pathway porphyrin-containing compound metabolism; protoporphyrin-IX biosynthesis; protoporphyrinogen-IX from coproporphyrinogen-III (O2 route): step 1/1. Its function is as follows. Involved in the heme biosynthesis. Catalyzes the aerobic oxidative decarboxylation of propionate groups of rings A and B of coproporphyrinogen-III to yield the vinyl groups in protoporphyrinogen-IX. The polypeptide is Oxygen-dependent coproporphyrinogen-III oxidase (Pseudomonas syringae pv. syringae (strain B728a)).